We begin with the raw amino-acid sequence, 342 residues long: Holliday junction branch migration complex subunit RuvB (342 aa).

The large ATPase domain (RuvB-L) stretch occupies residues 1–179; that stretch reads MTNILSPEKS…FGIPMRLNFY (179 aa). Residues isoleucine 18, arginine 19, glycine 60, lysine 63, threonine 64, threonine 65, 126–128, arginine 169, tyrosine 179, and arginine 216 contribute to the ATP site; that span reads EDF. Threonine 64 provides a ligand contact to Mg(2+). The small ATPAse domain (RuvB-S) stretch occupies residues 180 to 250; it reads NTEELKQVLN…ICDFGLKRLT (71 aa). The interval 253–342 is head domain (RuvB-H); sequence SIGLDSNDYR…HQFNILNENE (90 aa). Positions 289, 308, and 313 each coordinate DNA.

The protein belongs to the RuvB family. Homohexamer. Forms an RuvA(8)-RuvB(12)-Holliday junction (HJ) complex. HJ DNA is sandwiched between 2 RuvA tetramers; dsDNA enters through RuvA and exits via RuvB. An RuvB hexamer assembles on each DNA strand where it exits the tetramer. Each RuvB hexamer is contacted by two RuvA subunits (via domain III) on 2 adjacent RuvB subunits; this complex drives branch migration. In the full resolvosome a probable DNA-RuvA(4)-RuvB(12)-RuvC(2) complex forms which resolves the HJ.

The protein localises to the cytoplasm. It catalyses the reaction ATP + H2O = ADP + phosphate + H(+). Functionally, the RuvA-RuvB-RuvC complex processes Holliday junction (HJ) DNA during genetic recombination and DNA repair, while the RuvA-RuvB complex plays an important role in the rescue of blocked DNA replication forks via replication fork reversal (RFR). RuvA specifically binds to HJ cruciform DNA, conferring on it an open structure. The RuvB hexamer acts as an ATP-dependent pump, pulling dsDNA into and through the RuvAB complex. RuvB forms 2 homohexamers on either side of HJ DNA bound by 1 or 2 RuvA tetramers; 4 subunits per hexamer contact DNA at a time. Coordinated motions by a converter formed by DNA-disengaged RuvB subunits stimulates ATP hydrolysis and nucleotide exchange. Immobilization of the converter enables RuvB to convert the ATP-contained energy into a lever motion, pulling 2 nucleotides of DNA out of the RuvA tetramer per ATP hydrolyzed, thus driving DNA branch migration. The RuvB motors rotate together with the DNA substrate, which together with the progressing nucleotide cycle form the mechanistic basis for DNA recombination by continuous HJ branch migration. Branch migration allows RuvC to scan DNA until it finds its consensus sequence, where it cleaves and resolves cruciform DNA. The chain is Holliday junction branch migration complex subunit RuvB from Rickettsia typhi (strain ATCC VR-144 / Wilmington).